A 240-amino-acid chain; its full sequence is NADH-quinone oxidoreductase subunit I 2 (240 aa).

4Fe-4S ferredoxin-type domains are found at residues 57–86 (TDLRTGEYKCTSCMQCAQACPVNVITIEWH) and 97–126 (DRFAIDMSRCMLCNFCVEACPFDSLVMGYD). Residues Cys-66, Cys-69, Cys-72, Cys-76, Cys-106, Cys-109, Cys-112, and Cys-116 each contribute to the [4Fe-4S] cluster site. The disordered stretch occupies residues 185 to 240 (IHGYLGRPPLPKGYEPELKPQFRKPAEEAAEAQQAEAAGQPAAEPGKTNGEEAGQP). The span at 198-211 (YEPELKPQFRKPAE) shows a compositional bias: basic and acidic residues. Residues 215–230 (EAQQAEAAGQPAAEPG) show a composition bias toward low complexity.

The protein belongs to the complex I 23 kDa subunit family. As to quaternary structure, NDH-1 is composed of 14 different subunits. Subunits NuoA, H, J, K, L, M, N constitute the membrane sector of the complex. The cofactor is [4Fe-4S] cluster.

Its subcellular location is the cell membrane. It carries out the reaction a quinone + NADH + 5 H(+)(in) = a quinol + NAD(+) + 4 H(+)(out). In terms of biological role, NDH-1 shuttles electrons from NADH, via FMN and iron-sulfur (Fe-S) centers, to quinones in the respiratory chain. The immediate electron acceptor for the enzyme in this species is believed to be ubiquinone. Couples the redox reaction to proton translocation (for every two electrons transferred, four hydrogen ions are translocated across the cytoplasmic membrane), and thus conserves the redox energy in a proton gradient. This Symbiobacterium thermophilum (strain DSM 24528 / JCM 14929 / IAM 14863 / T) protein is NADH-quinone oxidoreductase subunit I 2.